The chain runs to 158 residues: Low molecular weight phosphotyrosine protein phosphatase (158 aa).

Alanine 2 is modified (N-acetylalanine). The active-site Nucleophile is the cysteine 13. The active site involves arginine 19. Catalysis depends on aspartate 130, which acts as the Proton donor. A phosphotyrosine mark is found at tyrosine 132 and tyrosine 133.

Belongs to the low molecular weight phosphotyrosine protein phosphatase family. As to quaternary structure, interacts with EPHA2; dephosphorylates EPHA2. Interacts with EPHB1. Interacts with the SH3 domain of SPTAN1. Post-translationally, phosphorylated by LCK. Phosphorylation at Tyr-132 increases its phosphatase activity.

The protein resides in the cytoplasm. The catalysed reaction is O-phospho-L-tyrosyl-[protein] + H2O = L-tyrosyl-[protein] + phosphate. The enzyme catalyses a phosphate monoester + H2O = an alcohol + phosphate. Its activity is regulated as follows. Inhibited by sulfhydryl reagents. In terms of biological role, acts on tyrosine phosphorylated proteins, low-MW aryl phosphates and natural and synthetic acyl phosphates with differences in substrate specificity between isoform 1 and isoform 2. This is Low molecular weight phosphotyrosine protein phosphatase (ACP1) from Pongo abelii (Sumatran orangutan).